A 365-amino-acid polypeptide reads, in one-letter code: Mitogen-activated protein kinase 13 (365 aa).

Residues 25–308 form the Protein kinase domain; it reads YVSPTHVGSG…AAQALTHPFF (284 aa). 31 to 39 contributes to the ATP binding site; it reads VGSGAYGSV. At S47 the chain carries Phosphoserine. An ATP-binding site is contributed by K54. D150 functions as the Proton acceptor in the catalytic mechanism. A Phosphothreonine; by MAP2K3, MAP2K4, MAP2K6 and MAP2K7 modification is found at T180. The short motif at 180-182 is the TXY element; that stretch reads TGY. The residue at position 182 (Y182) is a Phosphotyrosine; by MAP2K3, MAP2K4, MAP2K6 and MAP2K7. S350 carries the post-translational modification Phosphoserine.

It belongs to the protein kinase superfamily. CMGC Ser/Thr protein kinase family. MAP kinase subfamily. Interacts with MAPK8IP2. The cofactor is Mg(2+). Dually phosphorylated on Thr-180 and Tyr-182 by MAP2K3/MKK3, MAP2K4/MKK4, MAP2K6/MKK6 and MAP2K7/MKK7, which activates the enzyme. Dephosphorylated by dual specificity phosphatase DUSP1. As to expression, expressed in testes, pancreas, small intestine, lung and kidney. Abundant in macrophages, also present in neutrophils, CD4+ T-cells, and endothelial cells.

The catalysed reaction is L-seryl-[protein] + ATP = O-phospho-L-seryl-[protein] + ADP + H(+). It catalyses the reaction L-threonyl-[protein] + ATP = O-phospho-L-threonyl-[protein] + ADP + H(+). Its activity is regulated as follows. Activated by phosphorylation on threonine and tyrosine by dual specificity kinases, MAP2K3/MKK3, MAP2K6/MKK6, MAP2K4/MKK4 and MAP2K7/MKK7. Activation by ultraviolet radiation, hyperosmotic shock, anisomycin or by TNF-alpha is mediated by MAP2K3/MKK3. Inhibited by dual specificity phosphatase DUSP1. Serine/threonine kinase which acts as an essential component of the MAP kinase signal transduction pathway. MAPK13 is one of the four p38 MAPKs which play an important role in the cascades of cellular responses evoked by extracellular stimuli such as pro-inflammatory cytokines or physical stress leading to direct activation of transcription factors such as ELK1 and ATF2. Accordingly, p38 MAPKs phosphorylate a broad range of proteins and it has been estimated that they may have approximately 200 to 300 substrates each. MAPK13 is one of the less studied p38 MAPK isoforms. Some of the targets are downstream kinases such as MAPKAPK2, which are activated through phosphorylation and further phosphorylate additional targets. Plays a role in the regulation of protein translation by phosphorylating and inactivating EEF2K. Involved in cytoskeletal remodeling through phosphorylation of MAPT and STMN1. Mediates UV irradiation induced up-regulation of the gene expression of CXCL14. Plays an important role in the regulation of epidermal keratinocyte differentiation, apoptosis and skin tumor development. Phosphorylates the transcriptional activator MYB in response to stress which leads to rapid MYB degradation via a proteasome-dependent pathway. MAPK13 also phosphorylates and down-regulates PRKD1 during regulation of insulin secretion in pancreatic beta cells. This Homo sapiens (Human) protein is Mitogen-activated protein kinase 13 (MAPK13).